The following is a 351-amino-acid chain: Uroporphyrinogen decarboxylase (351 aa).

Residues 26–30 (RQAGR), Asp-75, Tyr-151, Ser-206, and His-321 each bind substrate.

This sequence belongs to the uroporphyrinogen decarboxylase family. Homodimer.

The protein resides in the cytoplasm. The enzyme catalyses uroporphyrinogen III + 4 H(+) = coproporphyrinogen III + 4 CO2. It participates in porphyrin-containing compound metabolism; protoporphyrin-IX biosynthesis; coproporphyrinogen-III from 5-aminolevulinate: step 4/4. Functionally, catalyzes the decarboxylation of four acetate groups of uroporphyrinogen-III to yield coproporphyrinogen-III. The protein is Uroporphyrinogen decarboxylase of Koribacter versatilis (strain Ellin345).